Here is a 193-residue protein sequence, read N- to C-terminus: Ion-translocating oxidoreductase complex subunit A (193 aa).

6 helical membrane-spanning segments follow: residues 5–25, 47–67, 72–92, 102–122, 134–154, and 171–191; these read LLLF…FLGL, FVMT…LVPL, LRTL…EMVV, LLGI…VALL, AVYG…FAAI, and SIAL…TGLV.

Belongs to the NqrDE/RnfAE family. The complex is composed of six subunits: RnfA, RnfB, RnfC, RnfD, RnfE and RnfG.

It localises to the cell inner membrane. Part of a membrane-bound complex that couples electron transfer with translocation of ions across the membrane. In Serratia proteamaculans (strain 568), this protein is Ion-translocating oxidoreductase complex subunit A.